We begin with the raw amino-acid sequence, 441 residues long: Glutamyl-tRNA reductase (441 aa).

Residues 47–50 (TCNR), Ser-110, 115–117 (ERE), and Gln-121 contribute to the substrate site. The Nucleophile role is filled by Cys-48. 192–197 (GTGAYA) lines the NADP(+) pocket.

It belongs to the glutamyl-tRNA reductase family. As to quaternary structure, homodimer.

It carries out the reaction (S)-4-amino-5-oxopentanoate + tRNA(Glu) + NADP(+) = L-glutamyl-tRNA(Glu) + NADPH + H(+). The protein operates within porphyrin-containing compound metabolism; protoporphyrin-IX biosynthesis; 5-aminolevulinate from L-glutamyl-tRNA(Glu): step 1/2. In terms of biological role, catalyzes the NADPH-dependent reduction of glutamyl-tRNA(Glu) to glutamate 1-semialdehyde (GSA). The sequence is that of Glutamyl-tRNA reductase from Pseudarthrobacter chlorophenolicus (strain ATCC 700700 / DSM 12829 / CIP 107037 / JCM 12360 / KCTC 9906 / NCIMB 13794 / A6) (Arthrobacter chlorophenolicus).